The sequence spans 794 residues: Phenylalanine--tRNA ligase beta subunit (794 aa).

One can recognise a tRNA-binding domain in the interval alanine 39–arginine 148. Residues proline 399–serine 474 enclose the B5 domain. The Mg(2+) site is built by aspartate 452, aspartate 458, glutamate 461, and glutamate 462. The FDX-ACB domain occupies serine 700–arginine 793.

It belongs to the phenylalanyl-tRNA synthetase beta subunit family. Type 1 subfamily. Tetramer of two alpha and two beta subunits. It depends on Mg(2+) as a cofactor.

It localises to the cytoplasm. It catalyses the reaction tRNA(Phe) + L-phenylalanine + ATP = L-phenylalanyl-tRNA(Phe) + AMP + diphosphate + H(+). This Dechloromonas aromatica (strain RCB) protein is Phenylalanine--tRNA ligase beta subunit.